Reading from the N-terminus, the 242-residue chain is Small ribosomal subunit protein uS2 (242 aa).

This sequence belongs to the universal ribosomal protein uS2 family.

The polypeptide is Small ribosomal subunit protein uS2 (Colwellia psychrerythraea (strain 34H / ATCC BAA-681) (Vibrio psychroerythus)).